We begin with the raw amino-acid sequence, 272 residues long: Prephenate dehydratase (272 aa).

The Prephenate dehydratase domain occupies 4–179 (AVIYTLPKGT…NKTRFILIGK (176 aa)). Residues 194 to 269 (IVFELKEDKP…TFINLLGKYP (76 aa)) form the ACT domain.

Homodimer.

The enzyme catalyses prephenate + H(+) = 3-phenylpyruvate + CO2 + H2O. Its pathway is amino-acid biosynthesis; L-phenylalanine biosynthesis; phenylpyruvate from prephenate: step 1/1. With respect to regulation, inhibited by L-phenylalanine but not by L-tyrosine or L-tryptophan. This is Prephenate dehydratase (pheA) from Methanocaldococcus jannaschii (strain ATCC 43067 / DSM 2661 / JAL-1 / JCM 10045 / NBRC 100440) (Methanococcus jannaschii).